A 210-amino-acid chain; its full sequence is Homeobox protein Rhox5 (210 aa).

The tract at residues lysine 29–methionine 117 is disordered. The homeobox; atypical DNA-binding region spans methionine 117–arginine 175.

Its subcellular location is the nucleus. Functionally, transcription factor required for differentiation of embryonic stem cells (ESCs) into primordial germ cells. This is Homeobox protein Rhox5 (Rhox5) from Mus minutoides (Southern African pygmy mouse).